The sequence spans 275 residues: COP9 signalosome complex subunit 7a (275 aa).

Ser2 is subject to N-acetylserine. The region spanning 2–159 is the PCI domain; it reads SAEVKVTGQN…QRLEVDYSIG (158 aa). Residues 185-233 are a coiled coil; it reads LSGIEEQVSRANQHKEQQLGLKQQIESEVANLKKTIKVTTAAAAAATSQ. The segment at 227-275 is disordered; the sequence is AAAATSQDPEQHLTELREPAPGTNQRQPSKKASKGKGLRGSAKIWSKSN. Over residues 235 to 244 the composition is skewed to basic and acidic residues; that stretch reads PEQHLTELRE. Residues 254–263 show a composition bias toward basic residues; the sequence is PSKKASKGKG.

The protein belongs to the CSN7/EIF3M family. CSN7 subfamily. In terms of assembly, component of the CSN complex, composed of COPS1/GPS1, COPS2, COPS3, COPS4, COPS5, COPS6, COPS7 (COPS7A or COPS7B), COPS8 and COPS9. In the complex, it probably interacts directly with COPS1, COPS2, COPS4, COPS5, COPS6 and COPS8. Interacts with PMF1. Interacts with the translation initiation factor EIF3S6. Interacts with CK2 and PKD. Interacts directly with ID3. Post-translationally, phosphorylated by CK2 and PKD kinases.

It is found in the cytoplasm. Its subcellular location is the nucleus. Component of the COP9 signalosome complex (CSN), a complex involved in various cellular and developmental processes. The CSN complex is an essential regulator of the ubiquitin (Ubl) conjugation pathway by mediating the deneddylation of the cullin subunits of SCF-type E3 ligase complexes, leading to decrease the Ubl ligase activity of SCF-type complexes such as SCF, CSA or DDB2. The complex is also involved in phosphorylation of p53/TP53, JUN, I-kappa-B-alpha/NFKBIA, ITPK1 and IRF8/ICSBP, possibly via its association with CK2 and PKD kinases. CSN-dependent phosphorylation of TP53 and JUN promotes and protects degradation by the Ubl system, respectively. The chain is COP9 signalosome complex subunit 7a (COPS7A) from Pongo abelii (Sumatran orangutan).